We begin with the raw amino-acid sequence, 220 residues long: Iron-sulfur cluster repair protein YtfE (220 aa).

The protein belongs to the RIC family. YtfE subfamily. Homodimer.

The protein localises to the cytoplasm. Functionally, di-iron-containing protein involved in the repair of iron-sulfur clusters damaged by oxidative and nitrosative stress conditions. This Shigella boydii serotype 4 (strain Sb227) protein is Iron-sulfur cluster repair protein YtfE.